Consider the following 523-residue polypeptide: Aldehyde oxidase GLOX (523 aa).

An N-terminal signal peptide occupies residues 1–19 (MILDAAIVALADLPGTWEL).

The protein localises to the secreted. Its subcellular location is the cell wall. It carries out the reaction an aldehyde + O2 + H2O = a carboxylate + H2O2 + H(+). Its function is as follows. Catalyzes the oxidation of aldehydes to the corresponding carboxylate by coupling the reaction to the reduction of dioxygen to hydrogen peroxide. Substrates include glyoxal and other aldehydes. Involved in disease resistance against the grapevine powdery mildew E.necator. Is sufficient to confer disease resistance to E.necator. Can produce hydrogen peroxide in response to E.necator infection, and this may directly play a role in the defense mechanism during plant-pathogen interactions. The chain is Aldehyde oxidase GLOX from Vitis pseudoreticulata (Chinese wild grapevine).